The sequence spans 492 residues: N-succinylglutamate 5-semialdehyde dehydrogenase (492 aa).

220–225 is an NAD(+) binding site; sequence GSANTG. Active-site residues include Glu243 and Cys277.

The protein belongs to the aldehyde dehydrogenase family. AstD subfamily.

It carries out the reaction N-succinyl-L-glutamate 5-semialdehyde + NAD(+) + H2O = N-succinyl-L-glutamate + NADH + 2 H(+). The protein operates within amino-acid degradation; L-arginine degradation via AST pathway; L-glutamate and succinate from L-arginine: step 4/5. Its function is as follows. Catalyzes the NAD-dependent reduction of succinylglutamate semialdehyde into succinylglutamate. This Escherichia coli (strain UTI89 / UPEC) protein is N-succinylglutamate 5-semialdehyde dehydrogenase.